A 274-amino-acid polypeptide reads, in one-letter code: Urease accessory protein UreD (274 aa).

The protein belongs to the UreD family. UreD, UreF and UreG form a complex that acts as a GTP-hydrolysis-dependent molecular chaperone, activating the urease apoprotein by helping to assemble the nickel containing metallocenter of UreC. The UreE protein probably delivers the nickel.

Its subcellular location is the cytoplasm. Its function is as follows. Required for maturation of urease via the functional incorporation of the urease nickel metallocenter. In Klebsiella pneumoniae subsp. pneumoniae (strain ATCC 700721 / MGH 78578), this protein is Urease accessory protein UreD.